Here is a 59-residue protein sequence, read N- to C-terminus: Embryonic testis differentiation protein homolog A (59 aa).

Residues 1 to 10 (MDKEVPKGSP) show a composition bias toward basic and acidic residues. The interval 1-25 (MDKEVPKGSPREPALNIKKSDKSFK) is disordered.

The protein is Embryonic testis differentiation protein homolog A of Homo sapiens (Human).